The following is a 428-amino-acid chain: Serine--tRNA ligase (428 aa).

231–233 (TAE) is a binding site for L-serine. Residue 262 to 264 (RSE) coordinates ATP. L-serine is bound at residue glutamate 285. Residue 349–352 (EISS) participates in ATP binding. Serine 385 lines the L-serine pocket.

The protein belongs to the class-II aminoacyl-tRNA synthetase family. Type-1 seryl-tRNA synthetase subfamily. As to quaternary structure, homodimer. The tRNA molecule binds across the dimer.

The protein localises to the cytoplasm. The catalysed reaction is tRNA(Ser) + L-serine + ATP = L-seryl-tRNA(Ser) + AMP + diphosphate + H(+). It catalyses the reaction tRNA(Sec) + L-serine + ATP = L-seryl-tRNA(Sec) + AMP + diphosphate + H(+). It participates in aminoacyl-tRNA biosynthesis; selenocysteinyl-tRNA(Sec) biosynthesis; L-seryl-tRNA(Sec) from L-serine and tRNA(Sec): step 1/1. Functionally, catalyzes the attachment of serine to tRNA(Ser). Is also able to aminoacylate tRNA(Sec) with serine, to form the misacylated tRNA L-seryl-tRNA(Sec), which will be further converted into selenocysteinyl-tRNA(Sec). The chain is Serine--tRNA ligase from Staphylococcus aureus (strain USA300).